The primary structure comprises 32 residues: ilv operon leader peptide (32 aa).

Functionally, this protein is involved in control of the biosynthesis of isoleucine, leucine, and valine. This Escherichia coli (strain K12) protein is ilv operon leader peptide (ivbL).